Here is a 115-residue protein sequence, read N- to C-terminus: Non-specific lipid-transfer protein 4.1 (115 aa).

Positions 1-25 are cleaved as a signal peptide; the sequence is MARAAASQLVLVALVAAMLLVAADA. 4 cysteine pairs are disulfide-bonded: cysteine 29-cysteine 77, cysteine 39-cysteine 54, cysteine 55-cysteine 97, and cysteine 75-cysteine 111.

The protein belongs to the plant LTP family.

Plant non-specific lipid-transfer proteins transfer phospholipids as well as galactolipids across membranes. May play a role in wax or cutin deposition in the cell walls of expanding epidermal cells and certain secretory tissues. The sequence is that of Non-specific lipid-transfer protein 4.1 (LTP4.1) from Hordeum vulgare (Barley).